Reading from the N-terminus, the 88-residue chain is Large ribosomal subunit protein bL27 (88 aa).

The disordered stretch occupies residues 1–21 (MAHKKGQGSTQNNRDSAGRRL).

Belongs to the bacterial ribosomal protein bL27 family.

The chain is Large ribosomal subunit protein bL27 from Helicobacter acinonychis (strain Sheeba).